Reading from the N-terminus, the 256-residue chain is Ribosomal RNA small subunit methyltransferase A (256 aa).

Residues His-12, Leu-14, Gly-39, Glu-60, Asp-83, and Asn-101 each contribute to the S-adenosyl-L-methionine site.

Belongs to the class I-like SAM-binding methyltransferase superfamily. rRNA adenine N(6)-methyltransferase family. RsmA subfamily.

Its subcellular location is the cytoplasm. It catalyses the reaction adenosine(1518)/adenosine(1519) in 16S rRNA + 4 S-adenosyl-L-methionine = N(6)-dimethyladenosine(1518)/N(6)-dimethyladenosine(1519) in 16S rRNA + 4 S-adenosyl-L-homocysteine + 4 H(+). Specifically dimethylates two adjacent adenosines (A1518 and A1519) in the loop of a conserved hairpin near the 3'-end of 16S rRNA in the 30S particle. May play a critical role in biogenesis of 30S subunits. The chain is Ribosomal RNA small subunit methyltransferase A from Nitrosomonas eutropha (strain DSM 101675 / C91 / Nm57).